A 318-amino-acid chain; its full sequence is MPREDRATWKSNYFLKIIQLLDDYPKCFIVGADNVGSKQMQQIRMSLRGKAVVLMGKNTMMRKAIRGHLENNPALEKLLPHIRGNVGFVFTKEDLTEIRDMLLANKVPAAARAGAIAPCEVTVPAQNTGLGPEKTSFFQALGITTKISRGTIEILSDVQLIKTGDKVGASEATLLNMLNISPFSFGLVIQQVFDNGSIYNPEVLDITEETLHSRFLEGVRNVASVCLQIGYPTVASVPHSIINGYKRVLALSVETDYTFPLAEKVKAFLADPSAFVAAAPVAAAPAAAPAATTAAPAKVEAKEESEESDEDMGFGLFD.

Tyr-24 is modified (phosphotyrosine). Thr-59 is modified (phosphothreonine). Lys-264 is covalently cross-linked (Glycyl lysine isopeptide (Lys-Gly) (interchain with G-Cter in ubiquitin)). Positions 293-318 (TAAPAKVEAKEESEESDEDMGFGLFD) are disordered. A Glycyl lysine isopeptide (Lys-Gly) (interchain with G-Cter in SUMO1); alternate cross-link involves residue Lys-298. Lys-298 is covalently cross-linked (Glycyl lysine isopeptide (Lys-Gly) (interchain with G-Cter in SUMO2); alternate). The segment covering 303-312 (EESEESDEDM) has biased composition (acidic residues). 2 positions are modified to phosphoserine: Ser-305 and Ser-308.

It belongs to the universal ribosomal protein uL10 family. In terms of assembly, P0 forms a pentameric complex by interaction with dimers of P1 and P2. Identified in a IGF2BP1-dependent mRNP granule complex containing untranslated mRNAs. Interacts with APEX1. Interacts with FMR1. Post-translationally, ubiquitinated at Lys-264 by RNF14 and RNF25 in response to ribosome collisions (ribosome stalling).

Its subcellular location is the nucleus. It localises to the cytoplasm. Functionally, ribosomal protein P0 is the functional equivalent of E.coli protein L10. The chain is Large ribosomal subunit protein uL10 (RPLP0) from Bos taurus (Bovine).